The primary structure comprises 320 residues: Cytochrome f (320 aa).

An N-terminal signal peptide occupies residues 1-35 (MQNRNFNNLIIKWAIRLISIMIIINTIFWSSISEA). Heme contacts are provided by Phe-36, Cys-56, Cys-59, and His-60. A helical transmembrane segment spans residues 286-305 (IQGLLLFFGSVILAQIFLVL).

It belongs to the cytochrome f family. The 4 large subunits of the cytochrome b6-f complex are cytochrome b6, subunit IV (17 kDa polypeptide, petD), cytochrome f and the Rieske protein, while the 4 small subunits are PetG, PetL, PetM and PetN. The complex functions as a dimer. The cofactor is heme.

The protein resides in the plastid. It is found in the chloroplast thylakoid membrane. Functionally, component of the cytochrome b6-f complex, which mediates electron transfer between photosystem II (PSII) and photosystem I (PSI), cyclic electron flow around PSI, and state transitions. This chain is Cytochrome f (petA), found in Marchantia polymorpha (Common liverwort).